The chain runs to 1360 residues: Zinc finger protein GLI1 (1360 aa).

The segment at 198–245 (DTIGSKRLEDGSEGDISSPASVGTQDPLLGLLDGRDDLEKDDGKHEPE) is disordered. Positions 230 to 245 (DGRDDLEKDDGKHEPE) are enriched in basic and acidic residues. The C2H2-type 1 zinc-finger motif lies at 250-275 (TNCHWESCTKEFDTQEHLVHHINNEH). The interval 298 to 306 (KAQYMLVVH) is interaction with DNA. 3 consecutive C2H2-type zinc fingers follow at residues 316-340 (HKCT…LRSH), 346-371 (YVCE…NRTH), and 377-402 (YVCK…KTVH). Interaction with DNA regions lie at residues 360–365 (ASDRAK) and 390–396 (DPSSLRK). Disordered stretches follow at residues 390–434 (DPSS…NVKG), 457–500 (ITLK…SFED), 718–740 (IIHP…RTGG), and 1120–1213 (YMNY…IQPQ). Positions 461 to 473 (SQPSPGGQSSCSS) are enriched in low complexity. Residues 474–496 (ERSPLGSTNNNDSGVEMNANTGG) show a composition bias toward polar residues. Positions 1134-1143 (SPSSQDSQSS) are enriched in low complexity. A compositionally biased stretch (polar residues) spans 1173–1190 (RQHSVSSQSTYMGSPNQL).

This sequence belongs to the GLI C2H2-type zinc-finger protein family.

It localises to the cytoplasm. The protein resides in the nucleus. In terms of biological role, acts as a transcriptional activator. Binds to the DNA consensus sequence 5'-GACCACCCA-3'. May regulate the transcription of specific genes during normal development. Mediates SHH signaling. Plays a role in cell proliferation and differentiation via its role in SHH signaling. This chain is Zinc finger protein GLI1 (gli1), found in Xenopus laevis (African clawed frog).